Here is a 242-residue protein sequence, read N- to C-terminus: UPF0309 protein BSUIS_B0903 (242 aa).

Residues 30–214 (AADLIAAAAR…ARLVGEGDAP (185 aa)) form the SIS domain.

It belongs to the UPF0309 family.

This Brucella suis (strain ATCC 23445 / NCTC 10510) protein is UPF0309 protein BSUIS_B0903.